Consider the following 379-residue polypeptide: Putative F-box protein At2g33190 (379 aa).

Residues 6–53 form the F-box domain; that stretch reads NGWSKLYPDLLRSIFESLSCLDFHRAGTVCSNWYAVSRSCPLYPWRIV.

The sequence is that of Putative F-box protein At2g33190 from Arabidopsis thaliana (Mouse-ear cress).